Consider the following 505-residue polypeptide: Tyrosine-protein kinase FRK (505 aa).

Phosphoserine occurs at positions 37 and 40. One can recognise an SH3 domain in the interval 42–110; the sequence is RHGHYFVALF…PSNYVAEDRS (69 aa). The 93-residue stretch at 116–208 folds into the SH2 domain; the sequence is WFFGAIGRSD…GLCVKLGKPC (93 aa). Threonine 178 carries the phosphothreonine modification. In terms of domain architecture, Protein kinase spans 234-491; sequence IQLLKRLGSG…TLRWKLEDYF (258 aa). ATP contacts are provided by residues 240–248 and lysine 262; that span reads LGSGQFGEV. Aspartate 354 (proton acceptor) is an active-site residue. Residue tyrosine 387 is modified to Phosphotyrosine; by autocatalysis.

Belongs to the protein kinase superfamily. Tyr protein kinase family. SRC subfamily. As to quaternary structure, interacts (via the SH3-domain) with PTEN. Interacts with RB1. As to expression, predominantly expressed in epithelial derived cell lines and tissues, especially normal liver, kidney, breast and colon.

It localises to the cytoplasm. The protein resides in the nucleus. It carries out the reaction L-tyrosyl-[protein] + ATP = O-phospho-L-tyrosyl-[protein] + ADP + H(+). In terms of biological role, non-receptor tyrosine-protein kinase that negatively regulates cell proliferation. Positively regulates PTEN protein stability through phosphorylation of PTEN on 'Tyr-336', which in turn prevents its ubiquitination and degradation, possibly by reducing its binding to NEDD4. May function as a tumor suppressor. In Homo sapiens (Human), this protein is Tyrosine-protein kinase FRK (FRK).